We begin with the raw amino-acid sequence, 134 residues long: Profilin-3 (134 aa).

Residues Cys-13 and Cys-118 are joined by a disulfide bond. The Involved in PIP2 interaction motif lies at 84 to 100 (AVIRGKKGSGGITIKKT). Position 114 is a phosphothreonine (Thr-114).

The protein belongs to the profilin family. In terms of assembly, occurs in many kinds of cells as a complex with monomeric actin in a 1:1 ratio. Phosphorylated by MAP kinases.

It localises to the cytoplasm. The protein localises to the cytoskeleton. Functionally, binds to actin and affects the structure of the cytoskeleton. At high concentrations, profilin prevents the polymerization of actin, whereas it enhances it at low concentrations. The sequence is that of Profilin-3 from Olea europaea (Common olive).